The sequence spans 90 residues: Bombyxin B-6 (90 aa).

An N-terminal signal peptide occupies residues 1–20; the sequence is MMKTSVMFMLVVVISLMCSS. 3 cysteine pairs are disulfide-bonded: C30–C76, C42–C89, and C75–C80. A propeptide spans 49 to 67 (c peptide like); that stretch reads GVAQYAPYFWTRQYLGSRG.

The protein belongs to the insulin family. As to quaternary structure, heterodimer of a B chain and an A chain linked by two disulfide bonds.

It is found in the secreted. Brain peptide responsible for activation of prothoracic glands to produce ecdysone in insects. This chain is Bombyxin B-6 (BBXB6), found in Bombyx mori (Silk moth).